Here is a 319-residue protein sequence, read N- to C-terminus: Methionyl-tRNA formyltransferase (319 aa).

110-113 (SLLP) contributes to the (6S)-5,6,7,8-tetrahydrofolate binding site.

It belongs to the Fmt family.

It carries out the reaction L-methionyl-tRNA(fMet) + (6R)-10-formyltetrahydrofolate = N-formyl-L-methionyl-tRNA(fMet) + (6S)-5,6,7,8-tetrahydrofolate + H(+). Its function is as follows. Attaches a formyl group to the free amino group of methionyl-tRNA(fMet). The formyl group appears to play a dual role in the initiator identity of N-formylmethionyl-tRNA by promoting its recognition by IF2 and preventing the misappropriation of this tRNA by the elongation apparatus. In Geobacillus thermodenitrificans (strain NG80-2), this protein is Methionyl-tRNA formyltransferase.